The following is a 578-amino-acid chain: Palmitoyltransferase ZDHHC1 (578 aa).

Residues 1-41 (MDVCSKNSNRTAPVSEGGIRRADVPLCSRTNGWSWPPHPFQ) are Cytoplasmic-facing. The helical transmembrane segment at 42-62 (FLAWLLYLYFAVTGFGVFVPL) threads the bilayer. The Lumenal portion of the chain corresponds to 63 to 71 (LPTHWIPAG). A helical membrane pass occupies residues 72-92 (YICTGITFVCHLFMHLMAVSI). Topologically, residues 93 to 174 (DPADYNVRAK…YWLFLNSVIS (82 aa)) are cytoplasmic. The region spanning 121-173 (ENCHCYLCEVDVGPKSKHCSACNKCVASFDHHCRWLNNCVGSRNYWLFLNSVI) is the DHHC domain. The S-palmitoyl cysteine intermediate role is filled by Cys153. Residues 175–195 (ALLGIVLVVVIASYVFIEFFL) form a helical membrane-spanning segment. Residues 196-230 (DPSKLRSDKHFQQVRNESVVWFVFLPVAPVTTAGP) lie on the Lumenal side of the membrane. The chain crosses the membrane as a helical span at residues 231–251 (AIPALAGVTIALGLLSALLLG). Topologically, residues 252–578 (HLLCFHIYLM…PSSRVGTSLA (327 aa)) are cytoplasmic. Over residues 278 to 288 (QEAGDSRKPPP) the composition is skewed to basic and acidic residues. Disordered regions lie at residues 278-298 (QEAG…PKLN), 345-376 (HMDE…KRKV), 497-517 (SAAG…TAAR), and 532-578 (SMFM…TSLA). Positions 363 to 376 (PHPHKHAQKKKRKV) are enriched in basic residues. The segment covering 552-561 (AAKRKQTGKK) has biased composition (basic residues).

This sequence belongs to the DHHC palmitoyltransferase family.

It is found in the endosome membrane. Its subcellular location is the endoplasmic reticulum membrane. The protein localises to the golgi apparatus. It carries out the reaction L-cysteinyl-[protein] + hexadecanoyl-CoA = S-hexadecanoyl-L-cysteinyl-[protein] + CoA. Its function is as follows. Palmitoyltransferase that catalyzes the addition of palmitate onto various protein substrates, such as ncdn and nlrp3. The protein is Palmitoyltransferase ZDHHC1 of Danio rerio (Zebrafish).